A 105-amino-acid polypeptide reads, in one-letter code: Phosphoribosyl-ATP pyrophosphatase (105 aa).

The protein belongs to the PRA-PH family.

The protein localises to the cytoplasm. The catalysed reaction is 1-(5-phospho-beta-D-ribosyl)-ATP + H2O = 1-(5-phospho-beta-D-ribosyl)-5'-AMP + diphosphate + H(+). It functions in the pathway amino-acid biosynthesis; L-histidine biosynthesis; L-histidine from 5-phospho-alpha-D-ribose 1-diphosphate: step 2/9. The protein is Phosphoribosyl-ATP pyrophosphatase of Methylococcus capsulatus (strain ATCC 33009 / NCIMB 11132 / Bath).